Here is a 71-residue protein sequence, read N- to C-terminus: Large ribosomal subunit protein bL31 (71 aa).

4 residues coordinate Zn(2+): Cys16, Cys18, Cys37, and Cys40.

Belongs to the bacterial ribosomal protein bL31 family. Type A subfamily. As to quaternary structure, part of the 50S ribosomal subunit. Zn(2+) is required as a cofactor.

Binds the 23S rRNA. The protein is Large ribosomal subunit protein bL31 of Sodalis glossinidius (strain morsitans).